A 324-amino-acid chain; its full sequence is Glutamyl-Q tRNA(Asp) synthetase (324 aa).

Residues 5 to 9 (RLAPS) and Glu-41 contribute to the L-glutamate site. The 'HIGH' region motif lies at 8–18 (PSPTGNIHLGN). The Zn(2+) site is built by Cys-105, Cys-107, Tyr-128, and Cys-132. 2 residues coordinate L-glutamate: Tyr-193 and Arg-211. A 'KMSKS' region motif is present at residues 249-253 (RLAKR). Residue Lys-252 participates in ATP binding.

It belongs to the class-I aminoacyl-tRNA synthetase family. GluQ subfamily. Requires Zn(2+) as cofactor.

In terms of biological role, catalyzes the tRNA-independent activation of glutamate in presence of ATP and the subsequent transfer of glutamate onto a tRNA(Asp). Glutamate is transferred on the 2-amino-5-(4,5-dihydroxy-2-cyclopenten-1-yl) moiety of the queuosine in the wobble position of the QUC anticodon. The polypeptide is Glutamyl-Q tRNA(Asp) synthetase (Nitratidesulfovibrio vulgaris (strain ATCC 29579 / DSM 644 / CCUG 34227 / NCIMB 8303 / VKM B-1760 / Hildenborough) (Desulfovibrio vulgaris)).